The chain runs to 327 residues: Beta-ketoacyl-[acyl-carrier-protein] synthase III (327 aa).

Residues Cys114 and His254 contribute to the active site. The ACP-binding stretch occupies residues Gln255–Arg259. Asn284 is a catalytic residue.

This sequence belongs to the thiolase-like superfamily. FabH family. In terms of assembly, homodimer.

Its subcellular location is the cytoplasm. It carries out the reaction malonyl-[ACP] + acetyl-CoA + H(+) = 3-oxobutanoyl-[ACP] + CO2 + CoA. Its pathway is lipid metabolism; fatty acid biosynthesis. Its function is as follows. Catalyzes the condensation reaction of fatty acid synthesis by the addition to an acyl acceptor of two carbons from malonyl-ACP. Catalyzes the first condensation reaction which initiates fatty acid synthesis and may therefore play a role in governing the total rate of fatty acid production. Possesses both acetoacetyl-ACP synthase and acetyl transacylase activities. Its substrate specificity determines the biosynthesis of branched-chain and/or straight-chain of fatty acids. The chain is Beta-ketoacyl-[acyl-carrier-protein] synthase III from Lactobacillus helveticus (strain DPC 4571).